The following is a 242-amino-acid chain: Putative S-adenosyl-L-methionine-dependent methyltransferase Mmcs_0580 (242 aa).

S-adenosyl-L-methionine contacts are provided by residues aspartate 104 and 134–135; that span reads DL.

Belongs to the UPF0677 family.

Its function is as follows. Exhibits S-adenosyl-L-methionine-dependent methyltransferase activity. The protein is Putative S-adenosyl-L-methionine-dependent methyltransferase Mmcs_0580 of Mycobacterium sp. (strain MCS).